A 113-amino-acid chain; its full sequence is T cell receptor alpha variable 8-6 (113 aa).

Positions 1-20 (MLLLLVPAFQVIFTLGGTRA) are cleaved as a signal peptide. Positions 21–113 (QSVTQLDSQV…DTAEYFCAVS (93 aa)) constitute an Ig-like domain. Residues Cys-42 and Cys-110 are joined by a disulfide bond. N-linked (GlcNAc...) asparagine glycosylation is found at Asn-43 and Asn-87.

As to quaternary structure, alpha-beta TR is a heterodimer composed of an alpha and beta chain; disulfide-linked. The alpha-beta TR is associated with the transmembrane signaling CD3 coreceptor proteins to form the TR-CD3 (TcR or TCR). The assembly of alpha-beta TR heterodimers with CD3 occurs in the endoplasmic reticulum where a single alpha-beta TR heterodimer associates with one CD3D-CD3E heterodimer, one CD3G-CD3E heterodimer and one CD247 homodimer forming a stable octameric structure. CD3D-CD3E and CD3G-CD3E heterodimers preferentially associate with TR alpha and TR beta chains, respectively. The association of the CD247 homodimer is the last step of TcR assembly in the endoplasmic reticulum and is required for transport to the cell surface.

It is found in the cell membrane. Its function is as follows. V region of the variable domain of T cell receptor (TR) alpha chain that participates in the antigen recognition. Alpha-beta T cell receptors are antigen specific receptors which are essential to the immune response and are present on the cell surface of T lymphocytes. Recognize peptide-major histocompatibility (MH) (pMH) complexes that are displayed by antigen presenting cells (APC), a prerequisite for efficient T cell adaptive immunity against pathogens. Binding of alpha-beta TR to pMH complex initiates TR-CD3 clustering on the cell surface and intracellular activation of LCK that phosphorylates the ITAM motifs of CD3G, CD3D, CD3E and CD247 enabling the recruitment of ZAP70. In turn ZAP70 phosphorylates LAT, which recruits numerous signaling molecules to form the LAT signalosome. The LAT signalosome propagates signal branching to three major signaling pathways, the calcium, the mitogen-activated protein kinase (MAPK) kinase and the nuclear factor NF-kappa-B (NF-kB) pathways, leading to the mobilization of transcription factors that are critical for gene expression and essential for T cell growth and differentiation. The T cell repertoire is generated in the thymus, by V-(D)-J rearrangement. This repertoire is then shaped by intrathymic selection events to generate a peripheral T cell pool of self-MH restricted, non-autoaggressive T cells. Post-thymic interaction of alpha-beta TR with the pMH complexes shapes TR structural and functional avidity. The sequence is that of T cell receptor alpha variable 8-6 from Homo sapiens (Human).